The chain runs to 318 residues: Ribosomal RNA small subunit methyltransferase A (318 aa).

6 residues coordinate S-adenosyl-L-methionine: asparagine 40, valine 42, glycine 67, glutamate 88, aspartate 118, and asparagine 137. Residues 296 to 305 (ADRGGSDREG) are compositionally biased toward basic and acidic residues. Residues 296–318 (ADRGGSDREGTSPPTAGQGAPAC) form a disordered region.

It belongs to the class I-like SAM-binding methyltransferase superfamily. rRNA adenine N(6)-methyltransferase family. RsmA subfamily.

Its subcellular location is the cytoplasm. The enzyme catalyses adenosine(1518)/adenosine(1519) in 16S rRNA + 4 S-adenosyl-L-methionine = N(6)-dimethyladenosine(1518)/N(6)-dimethyladenosine(1519) in 16S rRNA + 4 S-adenosyl-L-homocysteine + 4 H(+). Its function is as follows. Specifically dimethylates two adjacent adenosines (A1518 and A1519) in the loop of a conserved hairpin near the 3'-end of 16S rRNA in the 30S particle. May play a critical role in biogenesis of 30S subunits. The polypeptide is Ribosomal RNA small subunit methyltransferase A (Mycobacterium avium (strain 104)).